Reading from the N-terminus, the 418-residue chain is Actin-related protein 3 (418 aa).

Belongs to the actin family. ARP3 subfamily. In terms of assembly, component of the Arp2/3 complex.

The protein localises to the cytoplasm. The protein resides in the cytoskeleton. Functionally, functions as ATP-binding component of the Arp2/3 complex which is involved in regulation of actin polymerization and together with an activating nucleation-promoting factor (NPF) mediates the formation of branched actin networks. Seems to contact the pointed end of the daughter actin filament. Required during embryogenesis for the developmental migration of tail hemocytes anteriorly, along the ventral midline. The sequence is that of Actin-related protein 3 from Drosophila melanogaster (Fruit fly).